Here is a 205-residue protein sequence, read N- to C-terminus: High frequency lysogenization protein HflD homolog (205 aa).

Belongs to the HflD family.

Its subcellular location is the cytoplasm. It is found in the cell inner membrane. This is High frequency lysogenization protein HflD homolog from Vibrio parahaemolyticus serotype O3:K6 (strain RIMD 2210633).